The primary structure comprises 310 residues: Transcription initiation factor IIA subunit 1 (310 aa).

3 disordered regions span residues 52-78 (AISN…LSTV), 91-197 (IQLN…NNKD), and 218-261 (VIPQ…DDPD). 2 stretches are compositionally biased toward low complexity: residues 62–77 (TTAT…TLST) and 122–160 (SNGT…PSSL). 3 stretches are compositionally biased toward acidic residues: residues 173–183 (TLDESDNDDDN), 225–236 (LNDDDDLDDEEI), and 246–261 (DSLG…DDPD).

The protein belongs to the TFIIA subunit 1 family. TFIIA is a heterodimer of the large subunit 1 and a small subunit gamma.

It is found in the nucleus. Functionally, TFIIA is a component of the transcription machinery of RNA polymerase II and plays an important role in transcriptional activation. TFIIA in a complex with tbp mediates transcriptional activity. This is Transcription initiation factor IIA subunit 1 (gtf2a1) from Dictyostelium discoideum (Social amoeba).